A 97-amino-acid chain; its full sequence is Apolipoprotein C-II (97 aa).

An N-terminal signal peptide occupies residues 1-22; sequence MGSRFFLALFLVILMLGNEVQG. Residues 63-71 are lipid binding; it reads SMDEKLRDM. The tract at residues 75–97 is lipoprotein lipase cofactor; that stretch reads SSAAMSTYAGIFTDQLLTLLRGE.

It belongs to the apolipoprotein C2 family. As to expression, adult and fetal liver, intestine and peritoneal macrophages.

Its subcellular location is the secreted. Functionally, component of chylomicrons, very low-density lipoproteins (VLDL), low-density lipoproteins (LDL), and high-density lipoproteins (HDL) in plasma. Plays an important role in lipoprotein metabolism as an activator of lipoprotein lipase. The chain is Apolipoprotein C-II (Apoc2) from Mus musculus (Mouse).